A 226-amino-acid chain; its full sequence is Ribonuclease 3 (226 aa).

Positions 7–129 (LPRLCRTLGY…IIGAVYLDSD (123 aa)) constitute an RNase III domain. Glutamate 42 provides a ligand contact to Mg(2+). Residue aspartate 46 is part of the active site. Aspartate 115 and glutamate 118 together coordinate Mg(2+). The active site involves glutamate 118. Positions 156–226 (DAKTLLQEHL…AAQVLELLKK (71 aa)) constitute a DRBM domain.

It belongs to the ribonuclease III family. As to quaternary structure, homodimer. Requires Mg(2+) as cofactor.

Its subcellular location is the cytoplasm. It catalyses the reaction Endonucleolytic cleavage to 5'-phosphomonoester.. In terms of biological role, digests double-stranded RNA. Involved in the processing of primary rRNA transcript to yield the immediate precursors to the large and small rRNAs (23S and 16S). Processes some mRNAs, and tRNAs when they are encoded in the rRNA operon. Processes pre-crRNA and tracrRNA of type II CRISPR loci if present in the organism. The sequence is that of Ribonuclease 3 from Shewanella baltica (strain OS185).